A 692-amino-acid chain; its full sequence is Elongation factor G (692 aa).

Residues 8–282 form the tr-type G domain; the sequence is ENTRNIGIMA…AVIDYLPSPL (275 aa). GTP is bound by residues 17–24, 81–85, and 135–138; these read AHIDAGKT, DTPGH, and NKMD.

The protein belongs to the TRAFAC class translation factor GTPase superfamily. Classic translation factor GTPase family. EF-G/EF-2 subfamily.

The protein resides in the cytoplasm. Functionally, catalyzes the GTP-dependent ribosomal translocation step during translation elongation. During this step, the ribosome changes from the pre-translocational (PRE) to the post-translocational (POST) state as the newly formed A-site-bound peptidyl-tRNA and P-site-bound deacylated tRNA move to the P and E sites, respectively. Catalyzes the coordinated movement of the two tRNA molecules, the mRNA and conformational changes in the ribosome. The polypeptide is Elongation factor G (Bacillus cereus (strain ATCC 14579 / DSM 31 / CCUG 7414 / JCM 2152 / NBRC 15305 / NCIMB 9373 / NCTC 2599 / NRRL B-3711)).